We begin with the raw amino-acid sequence, 123 residues long: Ribosome-binding factor A (123 aa).

This sequence belongs to the RbfA family. In terms of assembly, monomer. Binds 30S ribosomal subunits, but not 50S ribosomal subunits or 70S ribosomes.

The protein resides in the cytoplasm. In terms of biological role, one of several proteins that assist in the late maturation steps of the functional core of the 30S ribosomal subunit. Associates with free 30S ribosomal subunits (but not with 30S subunits that are part of 70S ribosomes or polysomes). Required for efficient processing of 16S rRNA. May interact with the 5'-terminal helix region of 16S rRNA. The protein is Ribosome-binding factor A of Solibacter usitatus (strain Ellin6076).